A 663-amino-acid polypeptide reads, in one-letter code: Transketolase 2 (663 aa).

His25 contributes to the substrate binding site. Residues His65 and 113-115 each bind thiamine diphosphate; that span reads GPL. Asp154 contributes to the Mg(2+) binding site. Thiamine diphosphate contacts are provided by Gly155 and Asn184. Mg(2+) is bound by residues Asn184 and Ile186. 3 residues coordinate substrate: His259, Arg356, and Ser383. His259 contacts thiamine diphosphate. The active-site Proton donor is Glu410. A thiamine diphosphate-binding site is contributed by Phe436. Residues His460, Asp468, and Arg519 each coordinate substrate.

It belongs to the transketolase family. Homodimer. It depends on Mg(2+) as a cofactor. Ca(2+) serves as cofactor. The cofactor is Mn(2+). Co(2+) is required as a cofactor. Requires thiamine diphosphate as cofactor.

It catalyses the reaction D-sedoheptulose 7-phosphate + D-glyceraldehyde 3-phosphate = aldehydo-D-ribose 5-phosphate + D-xylulose 5-phosphate. Its function is as follows. Catalyzes the transfer of a two-carbon ketol group from a ketose donor to an aldose acceptor, via a covalent intermediate with the cofactor thiamine pyrophosphate. This chain is Transketolase 2 (tkt2), found in Aliivibrio fischeri (strain ATCC 700601 / ES114) (Vibrio fischeri).